The primary structure comprises 121 residues: Large ribosomal subunit protein uL14c (121 aa).

This sequence belongs to the universal ribosomal protein uL14 family. In terms of assembly, part of the 50S ribosomal subunit.

Its subcellular location is the plastid. It localises to the chloroplast. Binds to 23S rRNA. The polypeptide is Large ribosomal subunit protein uL14c (Pelargonium hortorum (Common geranium)).